Consider the following 576-residue polypeptide: MIRTLIALVPADKRGTLGLYTVLTVLSVVIRAAGTVLLVPLVAALFGDTPQDAWPWLGWLTAATAAGWIVDTTTSRLGFDLGFAVLDHTQHDVADRMPNIRLDWLTAENTATARAAIASTGPELVGLVVNLLTPLIGAVLLPAAIAVALVAVSPPLGLAALAGVVVLLGAMWASNRLSRKADTVADETNSAFTERIIEFARTQQALRAARRVEPARSLVGDALGAQHGAGVRLLAMQIPGQLLFSLASQLALILLAGMATWLTVRGELSVPEAVAMIVVVARYLEPFTSLSELTPAIESTRGTLGRIRAVLDAPTLTAGDAAPADTKSAPRIEFDCVTFGYGDHPVLDDVSFVLEPGSTTAIVGPSGSGKSTILSLIAGLHQPTEGRVLIDGVDAASLDDESRRAATSVVFQQPYLFDGSIRDNILVGDPGADEDRLAAAVRLARVDELTARLPNGDASKVGEAGAALSGGERQRVSIARALVKPAPVLLVDEATSALDTENEAAVVDALTADLRHRTRVIVAHRLASIRHADRVLFLDGGRIVEDGTIDGLLAAGGRFDEFWRRQHEAADWQITH.

Topologically, residues 1-25 are cytoplasmic; the sequence is MIRTLIALVPADKRGTLGLYTVLTV. Residues 19–299 enclose the ABC transmembrane type-1 domain; it reads LYTVLTVLSV…LSELTPAIES (281 aa). A helical membrane pass occupies residues 26 to 46; it reads LSVVIRAAGTVLLVPLVAALF. Topologically, residues 47-52 are periplasmic; that stretch reads GDTPQD. A helical transmembrane segment spans residues 53–73; it reads AWPWLGWLTAATAAGWIVDTT. Residues 74–131 lie on the Cytoplasmic side of the membrane; that stretch reads TSRLGFDLGFAVLDHTQHDVADRMPNIRLDWLTAENTATARAAIASTGPELVGLVVNL. The next 2 membrane-spanning stretches (helical) occupy residues 132-152 and 153-173; these read LTPL…LVAV and SPPL…AMWA. The Cytoplasmic portion of the chain corresponds to 174-241; that stretch reads SNRLSRKADT…RLLAMQIPGQ (68 aa). The chain crosses the membrane as a helical span at residues 242–262; it reads LLFSLASQLALILLAGMATWL. Residues 263 to 267 lie on the Periplasmic side of the membrane; the sequence is TVRGE. Residues 268-288 traverse the membrane as a helical segment; that stretch reads LSVPEAVAMIVVVARYLEPFT. At 289 to 576 the chain is on the cytoplasmic side; sequence SLSELTPAIE…HEAADWQITH (288 aa). The ABC transporter domain occupies 332–565; sequence IEFDCVTFGY…GGRFDEFWRR (234 aa). Residue 364-371 coordinates ATP; that stretch reads GPSGSGKS.

Belongs to the ABC transporter superfamily. Siderophore-Fe(3+) uptake transporter (SIUT) (TC 3.A.1.21) family. Forms a heterodimer with IrtA.

The protein resides in the cell inner membrane. Part of the ABC transporter complex IrtAB involved in the import of iron-bound mycobactin (Fe-MBT) and carboxymycobactin (Fe-cMBT). Has a preference for Fe-MBT over Fe-cMBT. Transmembrane domains (TMD) form a pore in the membrane and the ATP-binding domain (NBD) is responsible for energy generation. This is Mycobactin import ATP-binding/permease protein IrtB from Mycolicibacterium smegmatis (strain ATCC 700084 / mc(2)155) (Mycobacterium smegmatis).